We begin with the raw amino-acid sequence, 208 residues long: Ribosomal RNA small subunit methyltransferase G (208 aa).

Residues Gly-78, Phe-83, 101-103, 129-130, and Arg-142 each bind S-adenosyl-L-methionine; these read ERS and IE.

Belongs to the methyltransferase superfamily. RNA methyltransferase RsmG family.

Its subcellular location is the cytoplasm. In terms of biological role, specifically methylates the N7 position of a guanine in 16S rRNA. This chain is Ribosomal RNA small subunit methyltransferase G, found in Borreliella burgdorferi (strain ZS7) (Borrelia burgdorferi).